An 826-amino-acid polypeptide reads, in one-letter code: Dolichyl-diphosphooligosaccharide--protein glycosyltransferase subunit STT3B (826 aa).

The disordered stretch occupies residues 1 to 60 (MAEPSAPESKHKSSLNSSPWSGLMALGNSRHGHHGPGAQCAHKAAGGVAPPKPAPAGLSG). At Ala-2 the chain carries N-acetylalanine. Over 2-41 (AEPSAPESKHKSSLNSSPWSGLMALGNSRHGHHGPGAQCA) the chain is Cytoplasmic. A phosphoserine mark is found at Ser-13, Ser-18, and Ser-29. A helical membrane pass occupies residues 42-86 (HKAAGGVAPPKPAPAGLSGGLSQPAGWQSLLSFTILFLAWLAGFS). Over 87–173 (SRLFAVIRFE…VHIRDVCVFL (87 aa)) the chain is Lumenal. The DXD motif 1 motif lies at 101–103 (EFD). Asp-103 contributes to the Mn(2+) binding site. A helical transmembrane segment spans residues 174–192 (APTFSGLTSISTFLLTREL). The Cytoplasmic segment spans residues 193-194 (WN). A helical transmembrane segment spans residues 195 to 212 (QGAGLLAACFIAIVPGYI). At 213 to 223 (SRSVAGSFDNE) the chain is on the lumenal side. Mn(2+) is bound by residues Asp-221 and Glu-223. The DXD motif 2 signature appears at 221–223 (DNE). Residues 224–243 (GIAIFALQFTYYLWVKSVKT) form a helical membrane-spanning segment. At 244–245 (GS) the chain is on the cytoplasmic side. The helical transmembrane segment at 246–260 (VFWTMCCCLSYFYMV) threads the bilayer. Residues 261–265 (SAWGG) are Lumenal-facing. Residues 266 to 282 (YVFIINLIPLHVFVLLL) form a helical membrane-spanning segment. The Cytoplasmic segment spans residues 283–287 (MQRYS). A helical transmembrane segment spans residues 288 to 313 (KRVYIAYSTFYIVGLILSMQIPFVGF). Residues 314–321 (QPIRTSEH) lie on the Lumenal side of the membrane. Residues 322–341 (MAAAGVFALLQAYAFLQYLR) form a helical membrane-spanning segment. The Cytoplasmic segment spans residues 342–350 (DRLTKQEFQ). Residues 351–371 (TLFFLGVSLAAGAVFLSVIYL) form a helical membrane-spanning segment. Over 372-410 (TYTGYIAPWSGRFYSLWDTGYAKIHIPIIASVSEHQPTT) the chain is Lumenal. Residues 402-405 (SVSE) carry the SVSE motif motif. The chain crosses the membrane as a helical span at residues 411 to 433 (WVSFFFDLHILVCTFPAGLWFCI). Topologically, residues 434 to 439 (KNINDE) are cytoplasmic. A helical membrane pass occupies residues 440–456 (RVFVALYAISAVYFAGV). The Lumenal segment spans residues 457 to 460 (MVRL). Arg-459 provides a ligand contact to dolichyl diphosphooligosaccharide. The chain crosses the membrane as a helical span at residues 461–482 (MLTLTPVVCMLSAIAFSNVFEH). At 483 to 526 (YLGDDMKRENPPVEDSSDEDDKRNPGNLYDKAGKVRKHVTEQEK) the chain is on the cytoplasmic side. The disordered stretch occupies residues 490 to 512 (RENPPVEDSSDEDDKRNPGNLYD). Phosphoserine is present on residues Ser-498 and Ser-499. A helical transmembrane segment spans residues 527–552 (TEEGLGPNIKSIVTMLMLMLLMMFAV). Residues 553-826 (HCTWVTSNAY…KGKKISKKTV (274 aa)) lie on the Lumenal side of the membrane. The interval 604–606 (WWD) is interacts with target acceptor peptide in protein substrate. A WWDYG motif motif is present at residues 604–608 (WWDYG). Position 609 (Tyr-609) interacts with dolichyl diphosphooligosaccharide. N-linked (GlcNAc...) asparagine glycans are attached at residues Asn-616 and Asn-623. The N-linked (GlcNAc...) (high mannose) asparagine glycan is linked to Asn-627. N-linked (GlcNAc...) asparagine glycosylation is present at Asn-641. A DK motif motif is present at residues 671-678 (DINKFLWM).

The protein belongs to the STT3 family. As to quaternary structure, component of the oligosaccharyltransferase (OST) complex. There are 2 OST complexes, OST-A and OST-B, which contain STT3A or STT3B as catalytic subunit, respectively. OST-A and OST-B contain common core subunits RPN1, RPN2, OST48, OST4, DAD1 and TMEM258, and OST-B contains either MAGT1 or TUSC3 as specific accessory subunit. Requires Mg(2+) as cofactor. Mn(2+) serves as cofactor.

Its subcellular location is the endoplasmic reticulum. The protein localises to the endoplasmic reticulum membrane. It catalyses the reaction a di-trans,poly-cis-dolichyl diphosphooligosaccharide + L-asparaginyl-[protein] = N(4)-(oligosaccharide-(1-&gt;4)-N-acetyl-beta-D-glucosaminyl-(1-&gt;4)-N-acetyl-beta-D-glucosaminyl)-L-asparaginyl-[protein] + a di-trans,poly-cis-dolichyl diphosphate + H(+). It participates in protein modification; protein glycosylation. Its function is as follows. Catalytic subunit of the oligosaccharyl transferase (OST) complex that catalyzes the initial transfer of a defined glycan (Glc(3)Man(9)GlcNAc(2) in eukaryotes) from the lipid carrier dolichol-pyrophosphate to an asparagine residue within an Asn-X-Ser/Thr consensus motif in nascent polypeptide chains, the first step in protein N-glycosylation. N-glycosylation occurs cotranslationally and the complex associates with the Sec61 complex at the channel-forming translocon complex that mediates protein translocation across the endoplasmic reticulum (ER). All subunits are required for a maximal enzyme activity. This subunit contains the active site and the acceptor peptide and donor lipid-linked oligosaccharide (LLO) binding pockets. STT3B is present in a small subset of OST complexes and mediates both cotranslational and post-translational N-glycosylation of target proteins: STT3B-containing complexes are required for efficient post-translational glycosylation and while they are less competent than STT3A-containing complexes for cotranslational glycosylation, they have the ability to mediate glycosylation of some nascent sites that are not accessible for STT3A. STT3B-containing complexes also act post-translationally and mediate modification of skipped glycosylation sites in unfolded proteins. Plays a role in ER-associated degradation (ERAD) pathway that mediates ubiquitin-dependent degradation of misfolded endoplasmic reticulum proteins by mediating N-glycosylation of unfolded proteins, which are then recognized by the ERAD pathway and targeted for degradation. In Canis lupus familiaris (Dog), this protein is Dolichyl-diphosphooligosaccharide--protein glycosyltransferase subunit STT3B.